Consider the following 79-residue polypeptide: Small ribosomal subunit protein uS17 (79 aa).

The protein belongs to the universal ribosomal protein uS17 family. In terms of assembly, part of the 30S ribosomal subunit.

Its function is as follows. One of the primary rRNA binding proteins, it binds specifically to the 5'-end of 16S ribosomal RNA. This Rhizobium johnstonii (strain DSM 114642 / LMG 32736 / 3841) (Rhizobium leguminosarum bv. viciae) protein is Small ribosomal subunit protein uS17.